A 545-amino-acid chain; its full sequence is Leucine-rich repeat LGI family member 2 (545 aa).

The N-terminal stretch at 1–28 is a signal peptide; sequence MALRRGGCGALGLLLLLLGAACLIPRSA. Positions 29–65 constitute an LRRNT domain; it reads QVRRLARCPATCSCTKESIICVGSSWVPRIVPGDISS. Asparagine 70 carries N-linked (GlcNAc...) asparagine glycosylation. LRR repeat units lie at residues 86-107, 110-131, and 134-155; these read SLQL…AFAG, HLEY…AFRG, and DLTH…VFSD. The LRRCT domain maps to 167 to 217; sequence NKFECDCKAKWLYLWLKMTNSTVSDVLCIGPPEYQEKKLNDVTSFDYECTT. The N-linked (GlcNAc...) asparagine glycan is linked to asparagine 186. EAR repeat units lie at residues 219–261, 265–307, 311–358, 360–403, 407–450, 452–494, and 498–540; these read DFVV…EWDH, NFRS…KYDE, KFVK…KWNS, GFYS…QWNK, KFVP…RWNS, QFVE…QWDK, and LFKK…EHII. N-linked (GlcNAc...) asparagine glycosylation is present at asparagine 271. The N-linked (GlcNAc...) asparagine glycan is linked to asparagine 402.

As to expression, brain, heart and placenta.

It is found in the secreted. Functionally, required for the development of soma-targeting inhibitory GABAergic synapses made by parvalbumin-positive basket cells. This chain is Leucine-rich repeat LGI family member 2 (LGI2), found in Homo sapiens (Human).